Reading from the N-terminus, the 98-residue chain is Envelope glycoprotein N (98 aa).

The first 24 residues, 1 to 24 (MVSSAGLSLTLVAALCALVAPALS), serve as a signal peptide directing secretion. Residues 25–60 (SIVSTEGPLPLLREESRINFWNAACAARGVPVDQPT) are Virion surface-facing. A helical transmembrane segment spans residues 61 to 81 (AAAVTFYICLLAVLVVALGYA). At 82–98 (TRTCTRMLHASPAGRRV) the chain is on the intravirion side.

It belongs to the herpesviridae glycoprotein N family. As to quaternary structure, interacts (via N-terminus) with gM (via N-terminus). The gM-gN heterodimer forms the gCII complex. In terms of processing, O-glycosylated.

Its subcellular location is the virion membrane. The protein localises to the host membrane. The protein resides in the host Golgi apparatus. It localises to the host trans-Golgi network. Its function is as follows. Envelope glycoprotein necessary for proper maturation of gM and modulation of its membrane fusion activity. Also plays a critical role in virion morphogenesis. This is Envelope glycoprotein N from Suid herpesvirus 1 (SuHV-1).